The chain runs to 82 residues: uncharacterized protein (82 aa).

This is an uncharacterized protein from Rickettsia prowazekii (strain Madrid E).